Here is a 591-residue protein sequence, read N- to C-terminus: Homeobox domain-containing transcription factor HOB1 (591 aa).

A compositionally biased stretch (basic and acidic residues) spans 1-15 (MEGKNEDMHTPRGPE). 2 disordered regions span residues 1–37 (MEGK…DMLG) and 148–168 (IAGP…RSPA). A DNA-binding region (homeobox) is located at residues 176 to 223 (IAILRESYARNPNPDRKELERLAARTGRPWNKIREYFRQRRNKLRGLE). Disordered stretches follow at residues 420–463 (DAGL…PRES) and 543–563 (DAIE…ALTE). A compositionally biased stretch (acidic residues) spans 427–441 (QGEEDQPPTVEESDQ). Over residues 543 to 560 (DAIERRNAGESKRKRDDA) the composition is skewed to basic and acidic residues.

Its subcellular location is the nucleus. Functionally, general stress-responsive transcription factor that governs multiple stress responses and adaptations. Plays a key role in virulence. Mediates the expression of LAC1, which is the major laccase involved in melanin synthesis. Positively regulates BZP4 induction under conditions of nutrient starvation and basal expression levels of MBS1 and USV101, 3 major transcription factors that independently contribute to melanin production. Also acts as a key regulator of ergosterol gene expression. This chain is Homeobox domain-containing transcription factor HOB1, found in Cryptococcus neoformans var. grubii serotype A (strain H99 / ATCC 208821 / CBS 10515 / FGSC 9487) (Filobasidiella neoformans var. grubii).